Reading from the N-terminus, the 511-residue chain is ATP synthase subunit beta, mitochondrial (511 aa).

A mitochondrion-targeting transit peptide spans 1-33; the sequence is MVLPRLYTATSRAAFKAAKQSAPLLSTSWKRCM. A Phosphothreonine modification is found at Thr-112. 190-197 contacts ATP; sequence GGAGVGKT. Phosphothreonine is present on Thr-237. The residue at position 373 (Ser-373) is a Phosphoserine.

Belongs to the ATPase alpha/beta chains family. In terms of assembly, F-type ATPases have 2 components, CF(1) - the catalytic core - and CF(0) - the membrane proton channel. CF(1) has five subunits: alpha(3), beta(3), gamma(1), delta(1), epsilon(1). CF(0) has three main subunits: a, b and c.

Its subcellular location is the mitochondrion. It is found in the mitochondrion inner membrane. The enzyme catalyses ATP + H2O + 4 H(+)(in) = ADP + phosphate + 5 H(+)(out). In terms of biological role, mitochondrial membrane ATP synthase (F(1)F(0) ATP synthase or Complex V) produces ATP from ADP in the presence of a proton gradient across the membrane which is generated by electron transport complexes of the respiratory chain. F-type ATPases consist of two structural domains, F(1) - containing the extramembraneous catalytic core, and F(0) - containing the membrane proton channel, linked together by a central stalk and a peripheral stalk. During catalysis, ATP synthesis in the catalytic domain of F(1) is coupled via a rotary mechanism of the central stalk subunits to proton translocation. Subunits alpha and beta form the catalytic core in F(1). Rotation of the central stalk against the surrounding alpha(3)beta(3) subunits leads to hydrolysis of ATP in three separate catalytic sites on the beta subunits. The chain is ATP synthase subunit beta, mitochondrial (ATP2) from Saccharomyces cerevisiae (strain ATCC 204508 / S288c) (Baker's yeast).